Consider the following 667-residue polypeptide: Acyl-coenzyme A oxidase acox-3 (667 aa).

FAD is bound by residues 138–141 (FCLT), 146–147 (GS), Gly-178, Arg-313, 334–337 (QQYR), and Gly-410. The Proton acceptor role is filled by Glu-433. Glu-435 provides a ligand contact to FAD. A Microbody targeting signal motif is present at residues 665–667 (SKL).

This sequence belongs to the acyl-CoA oxidase family. Homodimer. Requires FAD as cofactor. In terms of tissue distribution, expressed in intestine.

It localises to the peroxisome. It catalyses the reaction IC-asc-C7-CoA + O2 = IC-asc-DeltaC7-CoA + H2O2. The catalysed reaction is IC-asc-C9-CoA + O2 = IC-asc-DeltaC9-CoA + H2O2. It carries out the reaction asc-C13-CoA + O2 = asc-DeltaC13-CoA + H2O2. The protein operates within lipid metabolism; peroxisomal fatty acid beta-oxidation. Its activity is regulated as follows. In contrast to other acyl-coenzyme A oxidases which bind to and are activated by ATP, does not bind ATP. Its function is as follows. Involved in the first step of peroxisomal beta-oxidation by catalyzing the desaturation of fatty acid-derived side chains of ascaroside pheromones, which regulates development and behavior. Specifically, shortens indol-3-carbonyl(IC)-ascarosides with 7-carbon (IC-asc-C7) or 9-carbon (IC-asc-C9) side chains and contributes to the shortening of ascarosides with 13-carbon (asc-C13) and 15-carbon (asc-C15) side chains. This is Acyl-coenzyme A oxidase acox-3 from Caenorhabditis elegans.